A 199-amino-acid chain; its full sequence is MAP6 domain-containing protein 1 (199 aa).

3 S-palmitoyl cysteine lipidation sites follow: cysteine 5, cysteine 10, and cysteine 11. The segment at 33–110 (YSDLDSEEPG…SAQSSAPPAP (78 aa)) is disordered. The residue at position 38 (serine 38) is a Phosphoserine. Mn regions lie at residues 130–143 (TTSY…WTGV) and 165–177 (DSSP…VPEV). The residue at position 167 (serine 167) is a Phosphoserine.

Belongs to the STOP family. As to quaternary structure, interacts with calmodulin. Palmitoylated. Palmitoylation enhances association with microtubules.

The protein resides in the golgi apparatus. Its subcellular location is the cytoplasm. It is found in the cytoskeleton. In terms of biological role, may have microtubule-stabilizing activity. The sequence is that of MAP6 domain-containing protein 1 (MAP6D1) from Homo sapiens (Human).